Consider the following 603-residue polypeptide: Serine/threonine-protein kinase HAL4/SAT4 (603 aa).

Composition is skewed to polar residues over residues 1–15 (MTGM…PQQT), 30–60 (RSGS…SASK), and 68–85 (TPTT…NTAG). Disordered regions lie at residues 1 to 86 (MTGM…TAGV), 150 to 171 (LSPK…PTPT), and 267 to 301 (DKYP…THNI). A compositionally biased stretch (low complexity) spans 159–171 (NSNTAITPAPTPT). A compositionally biased stretch (basic and acidic residues) spans 282-296 (PERDIYRSDQKDSKN). The 275-residue stretch at 316 to 590 (GRCQEVLGKG…GKQILNSEWG (275 aa)) folds into the Protein kinase domain. ATP contacts are provided by residues 322-330 (LGKGAFGVV) and Lys-353. Asp-449 (proton acceptor) is an active-site residue.

The protein belongs to the protein kinase superfamily. Ser/Thr protein kinase family.

The catalysed reaction is L-seryl-[protein] + ATP = O-phospho-L-seryl-[protein] + ADP + H(+). The enzyme catalyses L-threonyl-[protein] + ATP = O-phospho-L-threonyl-[protein] + ADP + H(+). In terms of biological role, promotes K(+) uptake, by the potassium transporter TRK1-TRK2, which leads to the subsequent cellular resistance to toxic cations such as Na(+), Li(+) and Ca(2+). The polypeptide is Serine/threonine-protein kinase HAL4/SAT4 (SAT4) (Saccharomyces cerevisiae (strain ATCC 204508 / S288c) (Baker's yeast)).